A 353-amino-acid polypeptide reads, in one-letter code: Photosystem II protein D1 (353 aa).

Threonine 2 bears the N-acetylthreonine mark. A Phosphothreonine modification is found at threonine 2. 3 consecutive transmembrane segments (helical) span residues 29-46, 118-133, and 142-156; these read YIGW…TATS, HFLL…EWEL, and WIAV…AATA. Histidine 118 contacts chlorophyll a. Residue tyrosine 126 coordinates pheophytin a. Aspartate 170 and glutamate 189 together coordinate [CaMn4O5] cluster. The chain crosses the membrane as a helical span at residues 197–218; sequence FHMLGVAGVFGGSLFSAMHGSL. Chlorophyll a is bound at residue histidine 198. A quinone contacts are provided by residues histidine 215 and 264 to 265; that span reads SF. Histidine 215 is a binding site for Fe cation. Histidine 272 is a binding site for Fe cation. A helical membrane pass occupies residues 274–288; that stretch reads FLAAWPVVGIWFTAL. The [CaMn4O5] cluster site is built by histidine 332, glutamate 333, aspartate 342, and alanine 344. Positions 345 to 353 are excised as a propeptide; sequence AMEAPSVNG.

The protein belongs to the reaction center PufL/M/PsbA/D family. In terms of assembly, PSII is composed of 1 copy each of membrane proteins PsbA, PsbB, PsbC, PsbD, PsbE, PsbF, PsbH, PsbI, PsbJ, PsbK, PsbL, PsbM, PsbT, PsbX, PsbY, PsbZ, Psb30/Ycf12, at least 3 peripheral proteins of the oxygen-evolving complex and a large number of cofactors. It forms dimeric complexes. The D1/D2 heterodimer binds P680, chlorophylls that are the primary electron donor of PSII, and subsequent electron acceptors. It shares a non-heme iron and each subunit binds pheophytin, quinone, additional chlorophylls, carotenoids and lipids. D1 provides most of the ligands for the Mn4-Ca-O5 cluster of the oxygen-evolving complex (OEC). There is also a Cl(-1) ion associated with D1 and D2, which is required for oxygen evolution. The PSII complex binds additional chlorophylls, carotenoids and specific lipids. serves as cofactor. Post-translationally, tyr-161 forms a radical intermediate that is referred to as redox-active TyrZ, YZ or Y-Z. In terms of processing, C-terminally processed by CTPA; processing is essential to allow assembly of the oxygen-evolving complex and thus photosynthetic growth.

The protein localises to the plastid. The protein resides in the chloroplast thylakoid membrane. The enzyme catalyses 2 a plastoquinone + 4 hnu + 2 H2O = 2 a plastoquinol + O2. Its function is as follows. Photosystem II (PSII) is a light-driven water:plastoquinone oxidoreductase that uses light energy to abstract electrons from H(2)O, generating O(2) and a proton gradient subsequently used for ATP formation. It consists of a core antenna complex that captures photons, and an electron transfer chain that converts photonic excitation into a charge separation. The D1/D2 (PsbA/PsbD) reaction center heterodimer binds P680, the primary electron donor of PSII as well as several subsequent electron acceptors. In Phaseolus vulgaris (Kidney bean), this protein is Photosystem II protein D1.